Here is a 492-residue protein sequence, read N- to C-terminus: Bifunctional protein GlmU (492 aa).

The tract at residues 1–241 is pyrophosphorylase; the sequence is MIPENTGPAA…RWQVEGANDR (241 aa). UDP-N-acetyl-alpha-D-glucosamine contacts are provided by residues 14-17, K28, Q81, 86-87, 112-114, G151, E166, N181, and N239; these read LAAG, GT, and YGD. D114 is a binding site for Mg(2+). N239 is a binding site for Mg(2+). The tract at residues 242 to 262 is linker; the sequence is VQLAALGAELNRRTVEAWMRA. An N-acetyltransferase region spans residues 263 to 492; that stretch reads GVTVVDPSTT…STPASTEEGK (230 aa). Positions 344 and 362 each coordinate UDP-N-acetyl-alpha-D-glucosamine. H374 (proton acceptor) is an active-site residue. UDP-N-acetyl-alpha-D-glucosamine contacts are provided by Y377 and N388. Residues 397 to 398, S416, and A434 contribute to the acetyl-CoA site; that span reads NY. The disordered stretch occupies residues 460–492; the sequence is WVPANRPGSRSAELAQAAINNSSSTPASTEEGK. The segment covering 477-492 has biased composition (polar residues); sequence AINNSSSTPASTEEGK.

It in the N-terminal section; belongs to the N-acetylglucosamine-1-phosphate uridyltransferase family. This sequence in the C-terminal section; belongs to the transferase hexapeptide repeat family. As to quaternary structure, homotrimer. Mg(2+) is required as a cofactor.

It localises to the cytoplasm. It catalyses the reaction alpha-D-glucosamine 1-phosphate + acetyl-CoA = N-acetyl-alpha-D-glucosamine 1-phosphate + CoA + H(+). The enzyme catalyses N-acetyl-alpha-D-glucosamine 1-phosphate + UTP + H(+) = UDP-N-acetyl-alpha-D-glucosamine + diphosphate. Its pathway is nucleotide-sugar biosynthesis; UDP-N-acetyl-alpha-D-glucosamine biosynthesis; N-acetyl-alpha-D-glucosamine 1-phosphate from alpha-D-glucosamine 6-phosphate (route II): step 2/2. It participates in nucleotide-sugar biosynthesis; UDP-N-acetyl-alpha-D-glucosamine biosynthesis; UDP-N-acetyl-alpha-D-glucosamine from N-acetyl-alpha-D-glucosamine 1-phosphate: step 1/1. The protein operates within bacterial outer membrane biogenesis; LPS lipid A biosynthesis. Functionally, catalyzes the last two sequential reactions in the de novo biosynthetic pathway for UDP-N-acetylglucosamine (UDP-GlcNAc). The C-terminal domain catalyzes the transfer of acetyl group from acetyl coenzyme A to glucosamine-1-phosphate (GlcN-1-P) to produce N-acetylglucosamine-1-phosphate (GlcNAc-1-P), which is converted into UDP-GlcNAc by the transfer of uridine 5-monophosphate (from uridine 5-triphosphate), a reaction catalyzed by the N-terminal domain. The chain is Bifunctional protein GlmU from Pseudarthrobacter chlorophenolicus (strain ATCC 700700 / DSM 12829 / CIP 107037 / JCM 12360 / KCTC 9906 / NCIMB 13794 / A6) (Arthrobacter chlorophenolicus).